A 141-amino-acid polypeptide reads, in one-letter code: Large ribosomal subunit protein bL17 (141 aa).

The tract at residues 120-141 is disordered; it reads TSAKGQDSGPVLTADEDEFEAA.

This sequence belongs to the bacterial ribosomal protein bL17 family. As to quaternary structure, part of the 50S ribosomal subunit. Contacts protein L32.

The chain is Large ribosomal subunit protein bL17 from Novosphingobium aromaticivorans (strain ATCC 700278 / DSM 12444 / CCUG 56034 / CIP 105152 / NBRC 16084 / F199).